Here is a 1523-residue protein sequence, read N- to C-terminus: Slit homolog 3 protein (1523 aa).

The first 33 residues, Met1–Ala33, serve as a signal peptide directing secretion. The LRRNT domain maps to Cys34–Arg61. LRR repeat units lie at residues Asn62–Gly83, Asn86–Asp107, Gln110–Ser131, Lys134–Gly155, Gly158–Ala179, and Asp182–His203. Asn72 carries N-linked (GlcNAc...) asparagine glycosylation. Asn192 is a glycosylation site (N-linked (GlcNAc...) asparagine). The LRRCT 1 domain maps to Asn215–Gly265. The LRRNT 2 domain maps to Pro271–Glu307. Cys284 and Cys293 are disulfide-bonded. LRR repeat units follow at residues Gly308–Gln329, Lys332–Gly353, Ser356–Gly377, Ser380–Asp401, and Asn404–Pro425. The 51-residue stretch at Asn437 to Gly487 folds into the LRRCT 2 domain. Intrachain disulfides connect Cys441/Cys464, Cys443/Cys485, Cys505/Cys511, and Cys509/Cys518. The LRRNT 3 domain occupies Ser496–Glu532. LRR repeat units lie at residues Tyr533–Lys554, Asn558–Gly579, Gly582–Gly603, Ser606–Gly627, and Ser630–Thr651. N-linked (GlcNAc...) asparagine glycosylation is present at Asn563. N-linked (GlcNAc...) asparagine glycosylation is present at Asn622. In terms of domain architecture, LRRCT 3 spans Asn663–Gly713. 2 disulfide bridges follow: Cys667/Cys690 and Cys669/Cys711. In terms of domain architecture, LRRNT 4 spans Glu716–Lys752. LRR repeat units follow at residues Asp753–Phe774, Gln776–Asn797, His800–Gly821, and Ser824–Asp845. Asn784, Asn792, and Asn797 each carry an N-linked (GlcNAc...) asparagine glycan. Residues Asn857–Gly907 enclose the LRRCT 4 domain. EGF-like domains follow at residues Asn918–Thr953, Pro955–Glu994, Asn996–Asp1032, Val1034–Glu1072, Asn1074–Glu1110, and Gln1119–Glu1155. 18 disulfides stabilise this stretch: Cys920–Cys931, Cys925–Cys941, Cys943–Cys952, Cys959–Cys970, Cys964–Cys982, Cys984–Cys993, Cys1000–Cys1011, Cys1005–Cys1020, Cys1022–Cys1031, Cys1038–Cys1051, Cys1045–Cys1060, Cys1062–Cys1071, Cys1078–Cys1089, Cys1083–Cys1098, Cys1100–Cys1109, Cys1123–Cys1134, Cys1128–Cys1143, and Cys1145–Cys1154. A glycan (N-linked (GlcNAc...) asparagine) is linked at Asn928. A glycan (N-linked (GlcNAc...) asparagine) is linked at Asn1025. The region spanning Ile1158 to Cys1332 is the Laminin G-like domain. 2 N-linked (GlcNAc...) asparagine glycosylation sites follow: Asn1181 and Asn1247. Intrachain disulfides connect Cys1305–Cys1332, Cys1355–Cys1364, Cys1372–Cys1382, Cys1377–Cys1391, and Cys1393–Cys1402. 2 consecutive EGF-like domains span residues His1340–Asp1365 and Ala1368–Asp1403. Asn1406 carries an N-linked (GlcNAc...) asparagine glycan. An EGF-like 9 domain is found at Ser1408–Glu1444. 7 disulfide bridges follow: Cys1412–Cys1422, Cys1417–Cys1432, Cys1434–Cys1443, Cys1449–Cys1487, Cys1467–Cys1501, Cys1478–Cys1517, and Cys1482–Cys1519. The 75-residue stretch at Cys1449–Ser1523 folds into the CTCK domain.

Its subcellular location is the secreted. May act as molecular guidance cue in cellular migration, and function may be mediated by interaction with roundabout homolog receptors. This chain is Slit homolog 3 protein (Slit3), found in Mus musculus (Mouse).